The sequence spans 832 residues: Histone acetyltransferase KAT2B (832 aa).

Residues Met-1–Pro-22 show a composition bias toward gly residues. Disordered stretches follow at residues Met-1–Pro-54 and Ser-395–Val-436. Positions Ala-24–Gly-39 are enriched in pro residues. Low complexity predominate over residues Ser-40 to Pro-54. Polar residues predominate over residues Ser-395 to Pro-413. A compositionally biased stretch (basic and acidic residues) spans Pro-425–Val-436. The region spanning Leu-503–Asn-651 is the N-acetyltransferase domain. Glu-570 acts as the Proton donor/acceptor in catalysis. Acetyl-CoA contacts are provided by residues Cys-574 to Val-576, Gln-581 to Thr-587, and Tyr-612 to Gly-615. The segment at Ile-706–Pro-725 is disordered. Residues Ser-714–Pro-725 are compositionally biased toward basic and acidic residues. The 105-residue stretch at Arg-723 to Ala-827 folds into the Bromo domain.

Belongs to the acetyltransferase family. GCN5 subfamily. In terms of assembly, interacts with SIRT1. Interacts (unsumoylated form) with NR2C1; the interaction promotes transactivation activity. Interacts with EP300, CREBBP and DDX17. Interacts with NCOA1 and NCOA3. Component of a large chromatin remodeling complex, at least composed of MYSM1, KAT2B/PCAF, RBM10 and KIF11/TRIP5. Interacts with NR2C2 (hypophosphorylated and unsumoylated form); the interaction promotes the transactivation activity of NR2C2. Interacts with KLF1; the interaction does not acetylate KLF1 and there is no enhancement of its transactivational activity. Interacts with NFE4. Interacts with MECOM. Interacts with E2F1; the interaction acetylates E2F1 augmenting its DNA-binding and transcriptional activity. Interacts with NPAS2, BMAL1 and CLOCK. Interacts with BCAS3. Interacts with CEBPB. Interacts with NR4A3. Interacts with NFATC2. Interacts with TBX5. Interacts with PLK4. Interacts with RB1; this interaction leads to RB1 acetylation. Interacts with VRK1. As to quaternary structure, (Microbial infection) Interacts with and acetylates HIV-1 Tat. (Microbial infection) Interacts with HTLV-1 Tax. As to expression, ubiquitously expressed but most abundant in heart and skeletal muscle. Also expressed in the skin, in keratinocytes (at protein level).

The protein resides in the nucleus. It localises to the cytoplasm. The protein localises to the cytoskeleton. Its subcellular location is the microtubule organizing center. It is found in the centrosome. It catalyses the reaction L-lysyl-[histone] + acetyl-CoA = N(6)-acetyl-L-lysyl-[histone] + CoA + H(+). The enzyme catalyses L-lysyl-[protein] + acetyl-CoA = N(6)-acetyl-L-lysyl-[protein] + CoA + H(+). The catalysed reaction is spermidine + acetyl-CoA = N(8)-acetylspermidine + CoA + H(+). With respect to regulation, activated in vitro by very low concentrations of spermidine, but inhibited at spermidine concentrations higher than 4 uM. The activating effect of low spermidine concentrations may be mediated by N(8)-acetylspermidine produced by KAT2B/P/CAF itself acting as a positive feedback loop. Its function is as follows. Functions as a histone acetyltransferase (HAT) to promote transcriptional activation. Has significant histone acetyltransferase activity with core histones (H3 and H4), and also with nucleosome core particles. Has a a strong preference for acetylation of H3 at 'Lys-9' (H3K9ac). Also acetylates non-histone proteins, such as ACLY, MAPRE1/EB1, PLK4, RRP9/U3-55K and TBX5. Inhibits cell-cycle progression and counteracts the mitogenic activity of the adenoviral oncoprotein E1A. Acts as a circadian transcriptional coactivator which enhances the activity of the circadian transcriptional activators: NPAS2-BMAL1 and CLOCK-BMAL1 heterodimers. Involved in heart and limb development by mediating acetylation of TBX5, acetylation regulating nucleocytoplasmic shuttling of TBX5. Acts as a negative regulator of centrosome amplification by mediating acetylation of PLK4. Acetylates RRP9/U3-55K, a core subunit of the U3 snoRNP complex, impairing pre-rRNA processing. Acetylates MAPRE1/EB1, promoting dynamic kinetochore-microtubule interactions in early mitosis. Also acetylates spermidine. (Microbial infection) In case of HIV-1 infection, it is recruited by the viral protein Tat. Regulates Tat's transactivating activity and may help inducing chromatin remodeling of proviral genes. This chain is Histone acetyltransferase KAT2B, found in Homo sapiens (Human).